Reading from the N-terminus, the 483-residue chain is NADH-quinone oxidoreductase subunit N (483 aa).

Helical transmembrane passes span 13–33 (PALP…YGVF), 45–65 (GALA…NAYV), 80–100 (FMKL…LTFI), 111–131 (PVLI…NGLI), 165–185 (FVLG…IYGF), 205–225 (IGVI…ISAV), 244–264 (AFFA…VLFV), 276–296 (IIVF…IGQS), 301–321 (LMAY…AAGT), 328–348 (VLIY…CILA), 373–393 (AFMM…AGFF), 407–429 (LYPL…LRIV), and 452–472 (VLGI…PLIL).

It belongs to the complex I subunit 2 family. In terms of assembly, NDH-1 is composed of 14 different subunits. Subunits NuoA, H, J, K, L, M, N constitute the membrane sector of the complex.

Its subcellular location is the cell inner membrane. It catalyses the reaction a quinone + NADH + 5 H(+)(in) = a quinol + NAD(+) + 4 H(+)(out). In terms of biological role, NDH-1 shuttles electrons from NADH, via FMN and iron-sulfur (Fe-S) centers, to quinones in the respiratory chain. The immediate electron acceptor for the enzyme in this species is believed to be ubiquinone. Couples the redox reaction to proton translocation (for every two electrons transferred, four hydrogen ions are translocated across the cytoplasmic membrane), and thus conserves the redox energy in a proton gradient. This Parvibaculum lavamentivorans (strain DS-1 / DSM 13023 / NCIMB 13966) protein is NADH-quinone oxidoreductase subunit N.